The sequence spans 159 residues: uncharacterized protein (159 aa).

The next 3 helical transmembrane spans lie at 17–37, 44–64, and 67–87; these read FFFFFFFFSLPLSSFKLNLSS, WLIVFLLDFGEIMFPAPPLPI, and FSGALLPLSLFLGFLDVDLIA.

The protein resides in the membrane. This is an uncharacterized protein from Saccharomyces cerevisiae (strain ATCC 204508 / S288c) (Baker's yeast).